A 197-amino-acid polypeptide reads, in one-letter code: MSASRFIKCVTVGDGAVGKTCMLISYTSNTFPTDYVPTVFDNFSANVVVDGNTVNLGLWDTAGQEDYNRLRPLSYRGADVFLLAFSLISKASYENVSKKWIPELKHYAPGVPIILVGTKLDLRDDKQFFVDHPGAVPITTAQGEELRKQIGAPYYIECSSKTQLNVKGVFDAAIKVVLQPPKAKKKKKAQRGACSIL.

GTP is bound at residue G13–T20. Positions Y35–F43 match the Effector region motif. GTP-binding positions include D60–Q64 and T118–D121. Position 194 is a cysteine methyl ester (C194). Residue C194 is the site of S-geranylgeranyl cysteine attachment. Residues S195–L197 constitute a propeptide, removed in mature form.

It belongs to the small GTPase superfamily. Rho family.

The protein resides in the cytoplasm. It localises to the membrane. Inactive GDP-bound Rho GTPases reside in the cytosol, are found in a complex with Rho GDP-dissociation inhibitors (Rho GDIs), and are released from the GDI protein in order to translocate to membranes upon activation. The protein is Rac-like GTP-binding protein 6 (RAC6) of Oryza sativa subsp. japonica (Rice).